Consider the following 338-residue polypeptide: Anthocyanidin reductase ((2S)-flavan-3-ol-forming) (338 aa).

Residues 18–21, lysine 48, 87–90, and tyrosine 168 each bind NADP(+); these read TGFV and VATP.

The protein belongs to the NAD(P)-dependent epimerase/dehydratase family. Dihydroflavonol-4-reductase subfamily. Expressed in leaves and grape berries.

The enzyme catalyses a (2S,3R)-flavan-3-ol + 2 NADP(+) = an anthocyanidin with a 3-hydroxy group + 2 NADPH + 2 H(+). It carries out the reaction a (2S,3S)-flavan-3-ol + 2 NADP(+) = an anthocyanidin with a 3-hydroxy group + 2 NADPH + 2 H(+). It participates in secondary metabolite biosynthesis; flavonoid biosynthesis. Its function is as follows. Produces the terminal flavan-3-ol monomers required for the formation of proanthocyanidins or condensed tannins in leaves and flowers, as well as in the skin and seeds of developing berries. Behaves as a reductase and as a C-3 epimerase. Catalyzes the double reduction of anthocyanidins, producing a mixture of (2S,3S)- and (2S,3R)-flavan-3-ols. The enzyme catalyzes sequential hydride transfers to C-2 and C-4, respectively and epimerization at C-3 is achieved by tautomerization that occurs between the two hydride transfers. Converts cyanidin, pelargonidin and delphinidin into catechin and epicatechin, afzelechin and epiafzelechin, and gallocatechin and epigallocatechin respectively. This is Anthocyanidin reductase ((2S)-flavan-3-ol-forming) from Vitis vinifera (Grape).